A 208-amino-acid polypeptide reads, in one-letter code: Small ribosomal subunit protein uS4 (208 aa).

Positions 98–158 constitute an S4 RNA-binding domain; it reads SRLDNAVYRL…EKSRNMQVID (61 aa).

This sequence belongs to the universal ribosomal protein uS4 family. Part of the 30S ribosomal subunit. Contacts protein S5. The interaction surface between S4 and S5 is involved in control of translational fidelity.

One of the primary rRNA binding proteins, it binds directly to 16S rRNA where it nucleates assembly of the body of the 30S subunit. In terms of biological role, with S5 and S12 plays an important role in translational accuracy. The chain is Small ribosomal subunit protein uS4 from Desulfosudis oleivorans (strain DSM 6200 / JCM 39069 / Hxd3) (Desulfococcus oleovorans).